Consider the following 364-residue polypeptide: Fructose-1,6-bisphosphatase class 1 2 (364 aa).

4 residues coordinate Mg(2+): E101, D123, L125, and D126. Residues 126-129 and N218 contribute to the substrate site; that span reads DGSS. E290 provides a ligand contact to Mg(2+).

It belongs to the FBPase class 1 family. As to quaternary structure, homotetramer. The cofactor is Mg(2+).

The protein localises to the cytoplasm. It carries out the reaction beta-D-fructose 1,6-bisphosphate + H2O = beta-D-fructose 6-phosphate + phosphate. Its pathway is carbohydrate biosynthesis; gluconeogenesis. This Cupriavidus taiwanensis (strain DSM 17343 / BCRC 17206 / CCUG 44338 / CIP 107171 / LMG 19424 / R1) (Ralstonia taiwanensis (strain LMG 19424)) protein is Fructose-1,6-bisphosphatase class 1 2.